A 335-amino-acid chain; its full sequence is tRNA pseudouridine synthase D (335 aa).

Aspartate 77 serves as the catalytic Nucleophile. One can recognise a TRUD domain in the interval 152 to 308; sequence GFPNYFTEQR…AQNLNWQFEP (157 aa).

This sequence belongs to the pseudouridine synthase TruD family.

It catalyses the reaction uridine(13) in tRNA = pseudouridine(13) in tRNA. In terms of biological role, responsible for synthesis of pseudouridine from uracil-13 in transfer RNAs. This chain is tRNA pseudouridine synthase D, found in Actinobacillus succinogenes (strain ATCC 55618 / DSM 22257 / CCUG 43843 / 130Z).